The primary structure comprises 1425 residues: Ferlin 1 (1425 aa).

C2 domains are found at residues 1-123 (MAAK…RQWV), 161-281 (VNEG…PRWF), and 506-629 (TKAG…PVWL). The tract at residues 871 to 952 (RPQASRLSRE…ALAASPEEET (82 aa)) is disordered. Basic and acidic residues-rich tracts occupy residues 877–889 (LSRE…ERGK) and 912–926 (ETEK…KKEG). C2 domains follow at residues 1032-1160 (EMDA…EQMV) and 1192-1319 (RADY…QQHY). A helical transmembrane segment spans residues 1404-1424 (TGVWMTVAGIIALVIFVMFLL).

This sequence belongs to the ferlin family.

It is found in the golgi apparatus. The protein localises to the trans-Golgi network membrane. The protein resides in the endosome membrane. It localises to the cytoplasm. Plays a role in microneme replenishment, probably at the vesicular trafficking level. Directs microneme organelle traffic differentially based on microneme population. Regulates microneme secretion: facilitates microneme membrane fusion with the plasma membrane. The sequence is that of Ferlin 1 from Toxoplasma gondii.